The sequence spans 124 residues: uncharacterized protein (124 aa).

Its subcellular location is the cytoplasm. It localises to the nucleus. This is an uncharacterized protein from Schizosaccharomyces pombe (strain 972 / ATCC 24843) (Fission yeast).